Reading from the N-terminus, the 920-residue chain is Disintegrin and metalloproteinase domain-containing protein 19 (920 aa).

Residues 1–26 (MPGRAGVARFCLLALALQLHWPLAAC) form the signal peptide. Residues 27–204 (EPGWTTRGSQ…TKKQPRRMKR (178 aa)) constitute a propeptide that is removed on maturation. Residues 27–703 (EPGWTTRGSQ…VDSGPLPPKS (677 aa)) lie on the Extracellular side of the membrane. Positions 131-138 (STCRGIRG) match the Cysteine switch motif. Residue Cys133 participates in Zn(2+) binding. Asn145 is a glycosylation site (N-linked (GlcNAc...) asparagine). A Peptidase M12B domain is found at 211 to 409 (KYVELYLVAD…GGGMCLSNMP (199 aa)). Intrachain disulfides connect Cys321-Cys404, Cys361-Cys388, and Cys362-Cys371. His346 contributes to the Zn(2+) binding site. Glu347 is a catalytic residue. Positions 350 and 356 each coordinate Zn(2+). The 87-residue stretch at 417 to 503 (GRRCGNGYLE…HCPTNYYQMD (87 aa)) folds into the Disintegrin domain. N-linked (GlcNAc...) asparagine glycosylation is found at Asn445 and Asn448. The cysteines at positions 475 and 495 are disulfide-linked. Asn649 carries an N-linked (GlcNAc...) asparagine glycan. An EGF-like domain is found at 654-686 (ETEGCGKKCNGHGVCNNNKNCHCFPGWSPPFCN). 3 disulfide bridges follow: Cys658–Cys668, Cys662–Cys674, and Cys676–Cys685. The helical transmembrane segment at 704–724 (VGPVIAGVFSALFVLAVLVLL) threads the bilayer. Over 725–920 (CHCYRQSHKL…RVGAIISSKI (196 aa)) the chain is Cytoplasmic. Residues 755 to 920 (SQSGGTGHAN…RVGAIISSKI (166 aa)) form a disordered region. Positions 767 to 783 (FKLQTPQGKRKVTNTPE) are enriched in polar residues. A compositionally biased stretch (basic and acidic residues) spans 825-834 (ARIERKESAR). The SH3-binding signature appears at 835-846 (RPPPSRPMPPAP). Composition is skewed to pro residues over residues 835–846 (RPPPSRPMPPAP) and 888–903 (TSGP…PVPK).

In terms of assembly, interacts with SH3PXD2A. Zn(2+) serves as cofactor. In terms of processing, the precursor is cleaved by a furin endopeptidase. Widely expressed, with the highest expression in bone, heart and lung, followed by brain and spleen and relatively low expression in liver, skeletal muscle, kidney and testis. In bone, primarily expressed in cell of the osteoblast lineage and not detected in mature osteoclasts.

The protein localises to the membrane. In terms of biological role, participates in the proteolytic processing of beta-type neuregulin isoforms which are involved in neurogenesis and synaptogenesis, suggesting a regulatory role in glial cell. Also cleaves alpha-2 macroglobulin. May be involved in osteoblast differentiation and/or osteoblast activity in bone. This chain is Disintegrin and metalloproteinase domain-containing protein 19 (Adam19), found in Mus musculus (Mouse).